The sequence spans 598 residues: Probable translation initiation factor IF-2 (598 aa).

The tr-type G domain maps to 3 to 225 (LRCPIVSVLG…GLAQKFLEQK (223 aa)). A G1 region spans residues 12–19 (GHVDHGKT). 12–19 (GHVDHGKT) contributes to the GTP binding site. A G2 region spans residues 37 to 41 (GITQH). The G3 stretch occupies residues 76-79 (DTPG). Residues 76–80 (DTPGH) and 130–133 (NKLD) contribute to the GTP site. The segment at 130–133 (NKLD) is G4. Positions 200–202 (SAM) are G5.

It belongs to the TRAFAC class translation factor GTPase superfamily. Classic translation factor GTPase family. IF-2 subfamily.

Function in general translation initiation by promoting the binding of the formylmethionine-tRNA to ribosomes. Seems to function along with eIF-2. The chain is Probable translation initiation factor IF-2 from Methanococcus maripaludis (strain C6 / ATCC BAA-1332).